The primary structure comprises 327 residues: Cytochrome f (327 aa).

The first 24 residues, 1 to 24, serve as a signal peptide directing secretion; the sequence is MKRIGLVFCALLLLLGMGARPAAA. Heme is bound by residues Tyr25, Cys45, Cys48, and His49. A helical membrane pass occupies residues 293-313; it reads VKWLVAFLAAITITQVLLVLK.

This sequence belongs to the cytochrome f family. In terms of assembly, the 4 large subunits of the cytochrome b6-f complex are cytochrome b6, subunit IV (17 kDa polypeptide, PetD), cytochrome f and the Rieske protein, while the 4 small subunits are PetG, PetL, PetM and PetN. The complex functions as a dimer. The cofactor is heme.

It localises to the cellular thylakoid membrane. Its function is as follows. Component of the cytochrome b6-f complex, which mediates electron transfer between photosystem II (PSII) and photosystem I (PSI), cyclic electron flow around PSI, and state transitions. The sequence is that of Cytochrome f from Synechococcus sp. (strain JA-2-3B'a(2-13)) (Cyanobacteria bacterium Yellowstone B-Prime).